A 340-amino-acid polypeptide reads, in one-letter code: UDP-3-O-(3-hydroxymyristoyl)glucosamine N-acyltransferase (340 aa).

His-239 (proton acceptor) is an active-site residue.

This sequence belongs to the transferase hexapeptide repeat family. LpxD subfamily. As to quaternary structure, homotrimer.

The catalysed reaction is a UDP-3-O-[(3R)-3-hydroxyacyl]-alpha-D-glucosamine + a (3R)-hydroxyacyl-[ACP] = a UDP-2-N,3-O-bis[(3R)-3-hydroxyacyl]-alpha-D-glucosamine + holo-[ACP] + H(+). It carries out the reaction UDP-3-O-[(3R)-3-hydroxytetradecanoyl]-alpha-D-glucosamine + (3R)-hydroxytetradecanoyl-[ACP] = UDP-2-N,3-O-bis[(3R)-3-hydroxytetradecanoyl]-alpha-D-glucosamine + holo-[ACP] + H(+). It functions in the pathway glycolipid biosynthesis; lipid IV(A) biosynthesis; lipid IV(A) from (3R)-3-hydroxytetradecanoyl-[acyl-carrier-protein] and UDP-N-acetyl-alpha-D-glucosamine: step 3/6. Functionally, catalyzes the N-acylation of UDP-3-O-(hydroxytetradecanoyl)glucosamine using 3-hydroxytetradecanoyl-ACP as the acyl donor. Is involved in the biosynthesis of lipid A, a phosphorylated glycolipid that anchors the lipopolysaccharide to the outer membrane of the cell. The chain is UDP-3-O-(3-hydroxymyristoyl)glucosamine N-acyltransferase from Yersinia enterocolitica.